Reading from the N-terminus, the 390-residue chain is O-phospho-L-seryl-tRNA:Cys-tRNA synthase 2 (390 aa).

Pyridoxal 5'-phosphate-binding positions include 83 to 84 (AR), asparagine 187, and 210 to 212 (SGH). Position 213 is an N6-(pyridoxal phosphate)lysine (lysine 213).

The protein belongs to the SepCysS family. In terms of assembly, homodimer. Interacts with SepRS. The cofactor is pyridoxal 5'-phosphate.

It catalyses the reaction O-phospho-L-seryl-tRNA(Cys) + hydrogen sulfide + H(+) = L-cysteinyl-tRNA(Cys) + phosphate. Converts O-phospho-L-seryl-tRNA(Cys) (Sep-tRNA(Cys)) to L-cysteinyl-tRNA(Cys) (Cys-tRNA(Cys)). The protein is O-phospho-L-seryl-tRNA:Cys-tRNA synthase 2 of Archaeoglobus fulgidus (strain ATCC 49558 / DSM 4304 / JCM 9628 / NBRC 100126 / VC-16).